Reading from the N-terminus, the 417-residue chain is NADH-quinone oxidoreductase subunit D (417 aa).

Belongs to the complex I 49 kDa subunit family. As to quaternary structure, NDH-1 is composed of 14 different subunits. Subunits NuoB, C, D, E, F, and G constitute the peripheral sector of the complex.

The protein resides in the cell inner membrane. It carries out the reaction a quinone + NADH + 5 H(+)(in) = a quinol + NAD(+) + 4 H(+)(out). Functionally, NDH-1 shuttles electrons from NADH, via FMN and iron-sulfur (Fe-S) centers, to quinones in the respiratory chain. The immediate electron acceptor for the enzyme in this species is believed to be ubiquinone. Couples the redox reaction to proton translocation (for every two electrons transferred, four hydrogen ions are translocated across the cytoplasmic membrane), and thus conserves the redox energy in a proton gradient. The chain is NADH-quinone oxidoreductase subunit D from Francisella philomiragia subsp. philomiragia (strain ATCC 25017 / CCUG 19701 / FSC 153 / O#319-036).